Consider the following 469-residue polypeptide: 3-isopropylmalate dehydratase large subunit (469 aa).

Residues Cys350, Cys410, and Cys413 each coordinate [4Fe-4S] cluster.

The protein belongs to the aconitase/IPM isomerase family. LeuC type 1 subfamily. Heterodimer of LeuC and LeuD. It depends on [4Fe-4S] cluster as a cofactor.

The catalysed reaction is (2R,3S)-3-isopropylmalate = (2S)-2-isopropylmalate. The protein operates within amino-acid biosynthesis; L-leucine biosynthesis; L-leucine from 3-methyl-2-oxobutanoate: step 2/4. Functionally, catalyzes the isomerization between 2-isopropylmalate and 3-isopropylmalate, via the formation of 2-isopropylmaleate. This chain is 3-isopropylmalate dehydratase large subunit, found in Rhizobium etli (strain CIAT 652).